A 271-amino-acid chain; its full sequence is Phosphonates import ATP-binding protein PhnC 2 (271 aa).

An ABC transporter domain is found at Leu-2–Ala-245. An ATP-binding site is contributed by Gly-34–Ser-41.

The protein belongs to the ABC transporter superfamily. Phosphonates importer (TC 3.A.1.9.1) family. In terms of assembly, the complex is composed of two ATP-binding proteins (PhnC), two transmembrane proteins (PhnE) and a solute-binding protein (PhnD).

Its subcellular location is the cell inner membrane. The enzyme catalyses phosphonate(out) + ATP + H2O = phosphonate(in) + ADP + phosphate + H(+). Part of the ABC transporter complex PhnCDE involved in phosphonates import. Responsible for energy coupling to the transport system. This Roseobacter denitrificans (strain ATCC 33942 / OCh 114) (Erythrobacter sp. (strain OCh 114)) protein is Phosphonates import ATP-binding protein PhnC 2.